We begin with the raw amino-acid sequence, 1382 residues long: Hepatocyte growth factor receptor (1382 aa).

Residues 1-24 (MKAPAVLAPGILVLLFTLVPRSHG) form the signal peptide. Topologically, residues 25 to 933 (ECKEALVKSE…VIVQPDQNFM (909 aa)) are extracellular. A Sema domain is found at 27–516 (KEALVKSEMN…TGNKITKIPL (490 aa)). Asparagine 45 carries N-linked (GlcNAc...) asparagine glycosylation. 4 cysteine pairs are disulfide-bonded: cysteine 95-cysteine 101, cysteine 98-cysteine 160, cysteine 133-cysteine 141, and cysteine 173-cysteine 176. The N-linked (GlcNAc...) asparagine glycan is linked to asparagine 106. Asparagine 203 and asparagine 359 each carry an N-linked (GlcNAc...) asparagine glycan. Intrachain disulfides connect cysteine 299/cysteine 364 and cysteine 386/cysteine 398. N-linked (GlcNAc...) asparagine glycans are attached at residues asparagine 400 and asparagine 406. Intrachain disulfides connect cysteine 521-cysteine 539, cysteine 527-cysteine 562, cysteine 530-cysteine 546, and cysteine 542-cysteine 552. 3 consecutive IPT/TIG domains span residues 564–656 (PAIY…FSYV), 658–740 (PVIT…FSYR), and 743–837 (PIVD…LTYV). Residue threonine 583 is glycosylated (O-linked (Man) threonine). N-linked (GlcNAc...) asparagine glycans are attached at residues asparagine 608, asparagine 614, and asparagine 636. Residues threonine 677 and threonine 762 are each glycosylated (O-linked (Man) threonine). N-linked (GlcNAc...) asparagine glycosylation is found at asparagine 786 and asparagine 880. A helical transmembrane segment spans residues 934 to 956 (GLIVGGVSISIILLLLLGLFLWL). Residues 957 to 1382 (KKKKRIKDLG…QDNVDGTVDT (426 aa)) lie on the Cytoplasmic side of the membrane. Position 967 is a phosphoserine (serine 967). Threonine 978 is subject to Phosphothreonine. Phosphoserine occurs at positions 991, 998, and 1001. Phosphotyrosine is present on tyrosine 1004. Residues 1079–1346 (VHFSEVIGRG…RISTIFSTFI (268 aa)) form the Protein kinase domain. Residues 1085 to 1093 (IGRGHFGCV) and lysine 1111 contribute to the ATP site. Aspartate 1205 acts as the Proton acceptor in catalysis. The interval 1213-1382 (LDEKFTVKVA…QDNVDGTVDT (170 aa)) is interaction with RANBP9. The residue at position 1231 (tyrosine 1231) is a Phosphotyrosine. Phosphotyrosine; by autocatalysis occurs at positions 1235 and 1236. Residue threonine 1290 is modified to Phosphothreonine. Positions 1321–1360 (WHPKAEMRPSFSELVSRISTIFSTFIGEHYVHVNATYVNV) are interaction with MUC20. A phosphotyrosine; by autocatalysis mark is found at tyrosine 1350 and tyrosine 1357. Position 1366 is a phosphotyrosine (tyrosine 1366).

This sequence belongs to the protein kinase superfamily. Tyr protein kinase family. In terms of assembly, heterodimer made of an alpha chain (50 kDa) and a beta chain (145 kDa) which are disulfide linked. Binds PLXNB1. Interacts when phosphorylated with downstream effectors including STAT3, PIK3R1, SRC, PCLG1, GRB2 and GAB1. Interacts with SPSB1, SPSB2 and SPSB4. Interacts with INPP5D/SHIP1. When phosphorylated at Tyr-1357, interacts with INPPL1/SHIP2. Interacts with RANBP9 and RANBP10, as well as SPSB1, SPSB2, SPSB3 and SPSB4. SPSB1 binding occurs in the presence and in the absence of HGF, however HGF treatment has a positive effect on this interaction. Interacts with MUC20; prevents interaction with GRB2 and suppresses hepatocyte growth factor-induced cell proliferation. Interacts with GRB10. Interacts with PTPN1 and PTPN2. Interacts with HSP90AA1 and HSP90AB1; the interaction suppresses MET kinase activity. Interacts with tensin TNS3. Interacts (when phosphorylated) with tensin TNS4 (via SH2 domain); the interaction increases MET protein stability by inhibiting MET endocytosis and subsequent lysosomal degradation. Autophosphorylated in response to ligand binding on Tyr-1235 and Tyr-1236 in the kinase domain leading to further phosphorylation of Tyr-1350 and Tyr-1357 in the C-terminal multifunctional docking site. Dephosphorylated by PTPRJ at Tyr-1350 and Tyr-1366. Dephosphorylated by PTPN1 and PTPN2. Post-translationally, ubiquitinated. Ubiquitination by CBL regulates the receptor stability and activity through proteasomal degradation. In terms of processing, O-mannosylation of IPT/TIG domains by TMEM260 is required for protein maturation. O-mannosylated residues are composed of single mannose glycans that are not elongated or modified.

It localises to the membrane. It carries out the reaction L-tyrosyl-[protein] + ATP = O-phospho-L-tyrosyl-[protein] + ADP + H(+). With respect to regulation, in its inactive state, the C-terminal tail interacts with the catalytic domain and inhibits the kinase activity. Upon ligand binding, the C-terminal tail is displaced and becomes phosphorylated, thus increasing the kinase activity. Its function is as follows. Receptor tyrosine kinase that transduces signals from the extracellular matrix into the cytoplasm by binding to hepatocyte growth factor/HGF ligand. Regulates many physiological processes including proliferation, scattering, morphogenesis and survival. Ligand binding at the cell surface induces autophosphorylation of MET on its intracellular domain that provides docking sites for downstream signaling molecules. Following activation by ligand, interacts with the PI3-kinase subunit PIK3R1, PLCG1, SRC, GRB2, STAT3 or the adapter GAB1. Recruitment of these downstream effectors by MET leads to the activation of several signaling cascades including the RAS-ERK, PI3 kinase-AKT, or PLCgamma-PKC. The RAS-ERK activation is associated with the morphogenetic effects while PI3K/AKT coordinates prosurvival effects. During embryonic development, MET signaling plays a role in gastrulation, development and migration of muscles and neuronal precursors, angiogenesis and kidney formation. In adults, participates in wound healing as well as organ regeneration and tissue remodeling. Also promotes differentiation and proliferation of hematopoietic cells. The sequence is that of Hepatocyte growth factor receptor (MET) from Oryctolagus cuniculus (Rabbit).